The primary structure comprises 279 residues: Phycobilisome rod-core linker polypeptide CpcG1 (279 aa).

The PBS-linker domain maps to 11–189; it reads TTQNQRVEGY…YWRNRLLEQF (179 aa).

Belongs to the phycobilisome linker protein family. In terms of assembly, the phycobilisome is a hemidiscoidal structure that is composed of two distinct substructures: a core complex and a number of rods radiating from the core.

It is found in the cellular thylakoid membrane. Functionally, rod-core linker protein required for attachment of phycocyanin to allophycocyanin in cores of phycobilisomes. Linker polypeptides determine the state of aggregation and the location of the disk-shaped phycobiliprotein units within the phycobilisome and modulate their spectroscopic properties in order to mediate a directed and optimal energy transfer. The sequence is that of Phycobilisome rod-core linker polypeptide CpcG1 (cpcG1) from Mastigocladus laminosus (Fischerella sp.).